The primary structure comprises 365 residues: Transmembrane protein 25 (365 aa).

The N-terminal stretch at 1 to 26 (MELPLSQATLRHTLLLLPALLSSGQG) is a signal peptide. At 27–232 (ELAPQIDGQT…APGLLATRIE (206 aa)) the chain is on the extracellular side. The Ig-like domain occupies 30–123 (PQIDGQTWAE…SGRPANASVI (94 aa)). Cysteine 52 and cysteine 107 are disulfide-bonded. Residues asparagine 106, asparagine 162, asparagine 192, and asparagine 205 are each glycosylated (N-linked (GlcNAc...) asparagine). A helical membrane pass occupies residues 233–253 (VPLLGIVVAGGLALGTLVGFS). At 254-365 (TLVACLVCRK…SSVSSDEIWL (112 aa)) the chain is on the cytoplasmic side.

In terms of assembly, interacts with GRIN2B. As to expression, expressed throughout the brain with higher levels within the hippocampus.

The protein localises to the late endosome. It localises to the lysosome. It is found in the cell membrane. Its subcellular location is the secreted. In terms of biological role, in neurons, modulates the degradation of NMDA receptor GRIN2B subunit. Plays a role in the regulation of neuronal excitability. In Mus musculus (Mouse), this protein is Transmembrane protein 25.